A 142-amino-acid polypeptide reads, in one-letter code: Large ribosomal subunit protein uL13 (142 aa).

It belongs to the universal ribosomal protein uL13 family. In terms of assembly, part of the 50S ribosomal subunit.

Its function is as follows. This protein is one of the early assembly proteins of the 50S ribosomal subunit, although it is not seen to bind rRNA by itself. It is important during the early stages of 50S assembly. The protein is Large ribosomal subunit protein uL13 of Maridesulfovibrio salexigens (strain ATCC 14822 / DSM 2638 / NCIMB 8403 / VKM B-1763) (Desulfovibrio salexigens).